The sequence spans 432 residues: MNLQTQKINSANATAKGTLEKALLEEKLDKLSKDAAKNLKVDGFRKGKVPAGVIKARYGEKLQEDAEREALQELLDAALKDLGAEPSQLIGDPRITEYNKHDNGIDVEVKIGLAPEITLQESLTYVPGFELPSVSEEEINTRLMELAKAKAPLAPAPEGKALENGDFAKIDFEGFLGEEAFEGGKAEDYMLQIGSKSFIPGFEDQLIGMKAGEKRDIQVKFPENYGSEKLAGQEATFKIALKEIQVKAPQEPSDEFAKSVLPEEPEANLNLLKEKIKEQIATEKKVELYNSELKTKLVDNLVEALAFDLPELVVEQEIDLVFRNTLSSLSKEEIEALRNDQEAVKAKREEHRESATRSVKVTFIVDALAKKEGIAVQDNELIQTIYYESMAMGQDPKAMLEYYKNNNLLPAVRMAMLEDKLLTHLLDQKIKG.

Residues 165-250 (GDFAKIDFEG…LKEIQVKAPQ (86 aa)) form the PPIase FKBP-type domain.

It belongs to the FKBP-type PPIase family. Tig subfamily.

It is found in the cytoplasm. It carries out the reaction [protein]-peptidylproline (omega=180) = [protein]-peptidylproline (omega=0). Functionally, involved in protein export. Acts as a chaperone by maintaining the newly synthesized protein in an open conformation. Functions as a peptidyl-prolyl cis-trans isomerase. The polypeptide is Trigger factor (Wolinella succinogenes (strain ATCC 29543 / DSM 1740 / CCUG 13145 / JCM 31913 / LMG 7466 / NCTC 11488 / FDC 602W) (Vibrio succinogenes)).